A 151-amino-acid chain; its full sequence is MD-2-related lipid-recognition protein (151 aa).

The signal sequence occupies residues 1 to 18 (MAALHWLLLAALLGCTLA). Intrachain disulfides connect C27–C141, C45–C51, and C95–C100. N58 carries N-linked (GlcNAc...) asparagine glycosylation.

N-glycosylated. In terms of tissue distribution, hemolymph (at protein level). Constitutively expressed mainly in fat body and also in hemocytes and secreted into hemolymph. Not detected in midgut, epidermis, or Malpighian tubule of naive larvae.

It localises to the secreted. In terms of biological role, binds to lipopolysaccharide from a variety of Gram-negative bacteria and to lipid A. The polypeptide is MD-2-related lipid-recognition protein (Manduca sexta (Tobacco hawkmoth)).